The primary structure comprises 550 residues: Eukaryotic translation initiation factor 3 subunit D-2 (550 aa).

Residues 108–152 form a disordered region; it reads RTRGRTGRGTPNIASLGGSTAGGATASTTKYGKGRHTRNTQNVGR. Residues 115–136 are compositionally biased toward low complexity; it reads RGTPNIASLGGSTAGGATASTT. The RNA gate stretch occupies residues 290–304; that stretch reads QFDLLTVNETSVEPP. Positions 527–550 are disordered; the sequence is PENAFDSDRDEEESSEPLSNSNDN.

Belongs to the eIF-3 subunit D family. As to quaternary structure, component of the eukaryotic translation initiation factor 3 (eIF-3) complex. The eIF-3 complex interacts with pix.

It localises to the cytoplasm. MRNA cap-binding component of the eukaryotic translation initiation factor 3 (eIF-3) complex, which is involved in protein synthesis of a specialized repertoire of mRNAs and, together with other initiation factors, stimulates binding of mRNA and methionyl-tRNAi to the 40S ribosome. The eIF-3 complex specifically targets and initiates translation of a subset of mRNAs involved in cell proliferation. In the eIF-3 complex, eif3d specifically recognizes and binds the 7-methylguanosine cap of a subset of mRNAs. In Drosophila sechellia (Fruit fly), this protein is Eukaryotic translation initiation factor 3 subunit D-2.